The primary structure comprises 637 residues: 3D-(3,5/4)-trihydroxycyclohexane-1,2-dione hydrolase (637 aa).

Position 66 (glutamate 66) interacts with thiamine diphosphate. Positions 442 to 522 (SLPGDLQRLW…INVLLFDNSG (81 aa)) are thiamine pyrophosphate binding. Mg(2+)-binding residues include aspartate 493 and asparagine 520.

It belongs to the TPP enzyme family. It depends on Mg(2+) as a cofactor. Thiamine diphosphate is required as a cofactor.

The catalysed reaction is 3D-3,5/4-trihydroxycyclohexane-1,2-dione + H2O = 5-deoxy-D-glucuronate + H(+). The protein operates within polyol metabolism; myo-inositol degradation into acetyl-CoA; acetyl-CoA from myo-inositol: step 3/7. Functionally, involved in the cleavage of the C1-C2 bond of 3D-(3,5/4)-trihydroxycyclohexane-1,2-dione (THcHDO) to yield 5-deoxy-glucuronate (5DG). The chain is 3D-(3,5/4)-trihydroxycyclohexane-1,2-dione hydrolase from Bacillus licheniformis (strain ATCC 14580 / DSM 13 / JCM 2505 / CCUG 7422 / NBRC 12200 / NCIMB 9375 / NCTC 10341 / NRRL NRS-1264 / Gibson 46).